Reading from the N-terminus, the 421-residue chain is MGSSSGQKPRRLEDLVDKLASGSLSHSRLEKELGNANEAALVRRLYLERLTGASLSSVASTILDFQELYGRNIENPIGAVQVPVGVAGPLRINGDYARGDFYIPLATTEGALVASVNRGAKAITLSGGARAKVIKDGMTRAPLLWTPSVYEAHRLAMWVEDRIEDLRSVVAGVTRHGRLQHIYPYIIGNLVWLRLSFSTGDAMGMNMVTISSDRICRYIEENYDGDAKCIALSGNMCTDKKPAAINKILGRGKYVVAEAVIKGEVVKNVLKTTPQNINLVNVTKNLLGSAAAGSHSFNAHFANIIAAIFIATGQDAAQVVESSMGYTWTEVRGEDLYISVTLPSLEVGTVGGGTRLPTQRELLALLGVAGGGNPPGSNALKLAEIIASAVLAGELNLLSAIAAGQLARAHELLGRGGLKIS.

Residues E109, K240, and D315 each act as charge relay system in the active site. The Proton donor role is filled by H410.

It belongs to the HMG-CoA reductase family.

The enzyme catalyses (R)-mevalonate + 2 NADP(+) + CoA = (3S)-3-hydroxy-3-methylglutaryl-CoA + 2 NADPH + 2 H(+). It participates in metabolic intermediate biosynthesis; (R)-mevalonate biosynthesis; (R)-mevalonate from acetyl-CoA: step 3/3. Converts HMG-CoA to mevalonate. The chain is 3-hydroxy-3-methylglutaryl-coenzyme A reductase (hmgA) from Aeropyrum pernix (strain ATCC 700893 / DSM 11879 / JCM 9820 / NBRC 100138 / K1).